A 128-amino-acid chain; its full sequence is Ribonuclease P protein component (128 aa).

Belongs to the RnpA family. As to quaternary structure, consists of a catalytic RNA component (M1 or rnpB) and a protein subunit.

It catalyses the reaction Endonucleolytic cleavage of RNA, removing 5'-extranucleotides from tRNA precursor.. RNaseP catalyzes the removal of the 5'-leader sequence from pre-tRNA to produce the mature 5'-terminus. It can also cleave other RNA substrates such as 4.5S RNA. The protein component plays an auxiliary but essential role in vivo by binding to the 5'-leader sequence and broadening the substrate specificity of the ribozyme. The protein is Ribonuclease P protein component of Rhizobium meliloti (strain 1021) (Ensifer meliloti).